A 360-amino-acid chain; its full sequence is Viral protein TPX (360 aa).

Positions 269-289 (TVTPISSPSPTPTPTPTPTPT) are disordered. The Thr-Pro(N) repeat unit spans residues 270–291 (VTPISSPSPTPTPTPTPTPTPT). Over residues 275 to 289 (SPSPTPTPTPTPTPT) the composition is skewed to pro residues. A 3 Thr-Pro repeats regions and two near identical repeats region spans residues 278–353 (PTPTPTPTPT…PTPTPTPTPT (76 aa)). Positions 292–301 (YDITYVVFDV) form a repeat. The stretch at 302–322 (TPSPTPTPTLTSTPTPTPTPT) is one Thr-Pro(N) repeat. The segment at residues 323–332 (YDITYVIFDV) is a repeat. Residues 332 to 360 (VTPSPTPTPTPTPTPTPTPTPTSTTSSNI) are disordered. Residues 333 to 353 (TPSPTPTPTPTPTPTPTPTPT) form a Thr-Pro(N) repeat. A compositionally biased stretch (pro residues) spans 335–351 (SPTPTPTPTPTPTPTPT).

This Thermoproteus tenax (TTV1) protein is Viral protein TPX.